The primary structure comprises 480 residues: Serralysin (480 aa).

His181 is a Zn(2+) binding site. Residue Glu182 is part of the active site. His185 and His191 together coordinate Zn(2+). Ca(2+) is bound by residues Arg260, Asp263, Asp292, Gly294, Gly295, Asp297, Thr334, and Glu336. Hemolysin-type calcium-binding repeat units follow at residues 339–356 (IGGSGNDVLIGNDAANTL) and 357–374 (KGGAGDDIIYGGLGADNL).

This sequence belongs to the peptidase M10B family. Zn(2+) serves as cofactor. Ca(2+) is required as a cofactor.

Its subcellular location is the secreted. It carries out the reaction Preferential cleavage of bonds with hydrophobic residues in P1'.. The chain is Serralysin (prtA) from Photorhabdus laumondii subsp. laumondii (strain DSM 15139 / CIP 105565 / TT01) (Photorhabdus luminescens subsp. laumondii).